The following is a 331-amino-acid chain: Induced myeloid leukemia cell differentiation protein Mcl-1 homolog (331 aa).

The interval 85-156 (LAVPPEEMAA…PPEEEEDDLY (72 aa)) is PEST-like. Ser-102 bears the Phosphoserine mark. Lys-117 is covalently cross-linked (Glycyl lysine isopeptide (Lys-Gly) (interchain with G-Cter in ubiquitin)). Positions 130–154 (EAAKSSGADGSLPSTPPPPEEEEDD) are disordered. At Ser-140 the chain carries Phosphoserine; by GSK3-alpha and GSK3-beta. A Phosphoserine modification is found at Ser-143. Residue Thr-144 is modified to Phosphothreonine; by MAPK. Residues Lys-175 and Lys-178 each participate in a glycyl lysine isopeptide (Lys-Gly) (interchain with G-Cter in ubiquitin) cross-link. Positions 190–204 (ALETLRRVGDGVQRN) match the BH3 motif. Positions 234–253 (VFKDGVTNWGRIVTLISFGA) match the BH1 motif. Residues 285 to 300 (DWLVKQRGWDGFVEFF) carry the BH2 motif. The chain crosses the membrane as a helical span at residues 308 to 330 (GIRNVLLAFAGVAGVGAGLAYLI).

The protein belongs to the Bcl-2 family. As to quaternary structure, interacts with HIF3A isoform 2 (via C-terminus domain). Interacts with BAD, BOK, BIK, BAX, BAK1, and TPT1. Interacts with BBC3, BMF and PMAIP1. Interacts with BOP. Interacts with BCL2L11; this interaction may sequester BCL2L11 and prevent its pro-apoptotic activity. Interacts with GIMAP5 and HSPA8/HSC70; the interaction between HSPA8 and MCL1 is impaired in the absence of GIMAP5. Cleaved by CASP3 during apoptosis, yielding a pro-apoptotic C-terminal fragment. In terms of processing, rapidly degraded in the absence of phosphorylation in the PEST region. Post-translationally, phosphorylated on Ser-140, by GSK3, in response to IL3/interleukin-3 withdrawal. Phosphorylation at Ser-140 induces ubiquitination and proteasomal degradation, abrogating the anti-apoptotic activity. Treatment with taxol or okadaic acid induces phosphorylation on additional sites. Ubiquitinated. Ubiquitination is induced by phosphorylation at Ser-140. Deubiquitinated by USP20; leading to increased stability.

The protein resides in the membrane. It localises to the cytoplasm. Its subcellular location is the mitochondrion. The protein localises to the nucleus. It is found in the nucleoplasm. Its function is as follows. Involved in the regulation of apoptosis versus cell survival, and in the maintenance of viability but not of proliferation. Mediates its effects by interactions with a number of other regulators of apoptosis. Isoform 2 has antiapoptotic activity. The chain is Induced myeloid leukemia cell differentiation protein Mcl-1 homolog (Mcl1) from Mus musculus (Mouse).